Consider the following 657-residue polypeptide: Iron-sulfur cluster biogenesis chaperone, mitochondrial (657 aa).

This sequence belongs to the heat shock protein 70 family. As to quaternary structure, interacts with the Fe/S cluster assembly proteins ISU1, MGE1, GRX5 and JAC1.

Its subcellular location is the mitochondrion matrix. It carries out the reaction ATP + H2O = ADP + phosphate + H(+). In terms of biological role, required for the assembly of iron-sulfur (Fe/S) clusters in mitochondria. Assisted by the DnaJ-like co-chaperone JAC1 and the nucleotide exchange factor MGE1, it mediates ATP-dependent Fe-S cluster transfer from the scaffold proteins ISU1/ISU2 to GRX5. This is Iron-sulfur cluster biogenesis chaperone, mitochondrial from Saccharomyces cerevisiae (strain ATCC 204508 / S288c) (Baker's yeast).